Reading from the N-terminus, the 514-residue chain is MKIRSQVGMVLNLDKCIGCHTCSVTCKNVWTGREGMEYAWFNNVETKPGIGYPKNWEDQEEWQGGWVRDVNGKIRPRLGNKMGVITKIFANPVVPQIDDYYEPFTFDYEHLHSAPEGKHIPTARPRSLIDGKRMDKVIWGPNWEELLGGEFEKRARDRNFEAMQKEMYGQFENTFMMYLPRLCEHCLNPSCVATCPSGAIYKREEDGIVLIDQDKCRGWRLCISGCPYKKIYFNWKSGKSEKCIFCYPRIESGQPTVCSETCVGRIRYLGVLLYDADRIEEAASTEREVDLYERQCEVFLDPHDPSVIEEALKQGIPQNVIDAAQRSPVYKMAMDWKLALPLHPEYRTLPMVWYVPPLSPIQSYADAGGLPKSEGVLPAIESLRIPVQYLANMLSAGDTGPVLRALKRMMAMRHYMRSQTVEGVTDTRAIDEVGLSVAQVEEMYRYLAIANYEDRFVIPTSHREMAGDAFAERNGCGFTFGDGCHGSDSKFNLFNSSRIDAINITEVRDKAEGE.

3 4Fe-4S ferredoxin-type domains span residues 7-35 (VGMV…GREG), 174-205 (TFMM…KREE), and 207-236 (GIVL…FNWK). Positions 16, 19, 22, 26, 183, 186, and 191 each coordinate [4Fe-4S] cluster. 3 residues coordinate [3Fe-4S] cluster: C195, C216, and C222. Residues C226, C243, C246, C258, and C262 each contribute to the [4Fe-4S] cluster site.

Dimer of heterotrimers each composed of an alpha, a beta and a gamma chain. Alpha and beta are catalytic chains; gamma chains are involved in binding the enzyme complex to the cytoplasmic membrane. [4Fe-4S] cluster is required as a cofactor. [3Fe-4S] cluster serves as cofactor.

The protein localises to the cell membrane. It catalyses the reaction nitrate + a quinol = a quinone + nitrite + H2O. Its function is as follows. This is a second nitrate reductase enzyme which can substitute for the NRA enzyme and allows E.coli to use nitrate as an electron acceptor during anaerobic growth. The beta chain is an electron transfer unit containing four cysteine clusters involved in the formation of iron-sulfur centers. Electrons are transferred from the gamma chain to the molybdenum cofactor of the alpha subunit. This Escherichia coli (strain K12) protein is Respiratory nitrate reductase 2 beta chain (narY).